The following is a 710-amino-acid chain: Polyribonucleotide nucleotidyltransferase (710 aa).

The Mg(2+) site is built by Asp-488 and Asp-494. The KH domain maps to 555–615; it reads PVIKVISIDP…EKVDAAIEQI (61 aa). Residues 625 to 688 enclose the S1 motif domain; that stretch reads GDVFSGKVTR…NLGRLQLEEF (64 aa). A disordered region spans residues 688–710; sequence FSDSPDHKHGEKRSFKRHRKNDN. Over residues 691 to 700 the composition is skewed to basic and acidic residues; it reads SPDHKHGEKR. A compositionally biased stretch (basic residues) spans 701–710; sequence SFKRHRKNDN.

This sequence belongs to the polyribonucleotide nucleotidyltransferase family. The cofactor is Mg(2+).

Its subcellular location is the cytoplasm. It catalyses the reaction RNA(n+1) + phosphate = RNA(n) + a ribonucleoside 5'-diphosphate. Involved in mRNA degradation. Catalyzes the phosphorolysis of single-stranded polyribonucleotides processively in the 3'- to 5'-direction. This Pseudothermotoga lettingae (strain ATCC BAA-301 / DSM 14385 / NBRC 107922 / TMO) (Thermotoga lettingae) protein is Polyribonucleotide nucleotidyltransferase.